The primary structure comprises 882 residues: MLLGASWLCASKAAAAAAQSEGDEDRPGERRRRRAAATAAGAGEDMDESSLLDLLECSVCLERLDTTAKVLPCQHTFCRRCLESIVCSRHELRCPECRILVGCGVDELPANILLVRLLDGIRQRPRAGTSPGGSPPARPIPGQSAAPTLAGGGGGAAGSTPGSPVFLSAAAGSTAGSLRELATSRTAPAAKNPCLLPYGKALYSYEGKEPGDLKFNKGDIIVLRRKVDEQWYHGELHGTQGFLPASYIQCIQPLPHAPPQGKALYDFEMKDKDQDKDCLTFTKDEILTVLRRVDENWAEGMLGDKIGIFPLLYVELNDSAKQLIEMDKPCPAAASSCNASLPSDSGAVASVAPSPTLSSSGAVSAFQRRVDGKKNTKKRHSFTALSVTHRSSQAASHRHSMEISAPVLISSSDPRAAARIGDLAHLSCAAPTQDVSSSAGSTPTAVPRAASVSGEQGTPPKVQLPLNVYLALYAYKPQKSDELELHKGEMYRVLEKCQDGWFKGASLRTGVSGVFPGNYVTPVSRVPAGGAGPPRNNVVGGSPLAKGITTTMHPGSGSLSSLATATRPALPITTPQAHAQHPTASPPTGSCLRHSAQPTASQARSTISTAAHSAAQAQDRPTATVSPLRTQNSPSRLPATSLRPHSVVSPQHSHQPPVQMCPRPAIPLTSAASAITPPNVSAANLNGEAGGGPIGVLSTSSPTNTGCKLDEKKSEKKEKKSGLLKLLAGASTKKKSRSPPSVSPTHDPQVAVDALLQGAVGPEVSSLSIHGRAGSCPIESEMQGAMGMEPLHRKAGSLDLNFTSPSRQAPLSMAAIRPEPKLLPRERYRVVVSYPPQSEAEIELKEGDIVFVHKKREDGWYKGTLQRNGRTGLFPGSFVESF.

The interval 18-42 is disordered; the sequence is AQSEGDEDRPGERRRRRAAATAAGA. An RING-type zinc finger spans residues 57 to 98; the sequence is CSVCLERLDTTAKVLPCQHTFCRRCLESIVCSRHELRCPECR. The interval 124 to 159 is disordered; it reads RPRAGTSPGGSPPARPIPGQSAAPTLAGGGGGAAGS. SH3 domains follow at residues 194 to 253 and 256 to 319; these read CLLP…CIQP and HAPP…LNDS. A disordered region spans residues 368–399; the sequence is RRVDGKKNTKKRHSFTALSVTHRSSQAASHRH. The interval 369-439 is interaction with RAC1; that stretch reads RVDGKKNTKK…APTQDVSSSA (71 aa). Phosphoserine is present on Ser400. Over residues 433–444 the composition is skewed to polar residues; sequence QDVSSSAGSTPT. The interval 433-458 is disordered; sequence QDVSSSAGSTPTAVPRAASVSGEQGT. An SH3 3 domain is found at 464–525; that stretch reads LPLNVYLALY…PGNYVTPVSR (62 aa). Polar residues-rich tracts occupy residues 575–588, 596–635, and 697–706; these read PQAHAQHPTASPPT, AQPTASQARSTISTAAHSAAQAQDRPTATVSPLRTQNSPS, and LSTSSPTNTG. Disordered regions lie at residues 575-664 and 693-747; these read PQAH…CPRP and PIGV…PTHD. Basic and acidic residues predominate over residues 708–721; the sequence is KLDEKKSEKKEKKS. Ser797 is modified (phosphoserine). The SH3 4 domain occupies 823-882; the sequence is LPRERYRVVVSYPPQSEAEIELKEGDIVFVHKKREDGWYKGTLQRNGRTGLFPGSFVESF.

The protein belongs to the SH3RF family. In terms of assembly, interacts (via SH3 domain 3) with PAK2. Interacts with RAC1 (GTP-bound form). Autoubiquitinated.

The catalysed reaction is S-ubiquitinyl-[E2 ubiquitin-conjugating enzyme]-L-cysteine + [acceptor protein]-L-lysine = [E2 ubiquitin-conjugating enzyme]-L-cysteine + N(6)-ubiquitinyl-[acceptor protein]-L-lysine.. Its pathway is protein modification; protein ubiquitination. In terms of biological role, has E3 ubiquitin-protein ligase activity. This is E3 ubiquitin-protein ligase SH3RF3 (SH3RF3) from Homo sapiens (Human).